We begin with the raw amino-acid sequence, 314 residues long: Vomeronasal type-1 receptor 98 (314 aa).

At 1-19 (MNKDTTMYCSAYIRDVFFC) the chain is on the extracellular side. A helical membrane pass occupies residues 20 to 40 (EIGVGISANSCLLLFHIFMFI). The Cytoplasmic portion of the chain corresponds to 41–49 (RGHRPRLTD). The chain crosses the membrane as a helical span at residues 50-70 (LPIGLMALIHLLMLLLAAYIA). The Extracellular portion of the chain corresponds to 71 to 92 (KDFFMSSGWDDITCKLFIFLHR). Residues cysteine 84 and cysteine 171 are joined by a disulfide bond. Residues 93–113 (FFRSLSVCATCMLSVFQTIIL) form a helical membrane-spanning segment. Residues 114–133 (CPQSSHLAKFKPNSPYHLSC) are Cytoplasmic-facing. A helical membrane pass occupies residues 134 to 154 (FFIFMSIFYTSISSHILIAAI). Over 155–186 (ATQNLTSVNLIYITKSCSFLPMSSSMQRTFST) the chain is Extracellular. A glycan (N-linked (GlcNAc...) asparagine) is linked at asparagine 158. A helical transmembrane segment spans residues 187–207 (LLAFRNAFLIGLMGLSTCYMA). Topologically, residues 208 to 235 (TLLCRHKTRSQRLQNSKLSPKATPEQRA) are cytoplasmic. Residues 236 to 256 (IWTLLMFMSFFLVMSTFDSII) traverse the membrane as a helical segment. The Extracellular segment spans residues 257–268 (SYSRTIFQGNPS). Residues 269–289 (LYCAQILVAHSYAVVSPMLVL) traverse the membrane as a helical segment. The Cytoplasmic segment spans residues 290–314 (SNENRLTNPLISMYERIVRLDFLCW).

The protein belongs to the G-protein coupled receptor 1 family.

The protein resides in the cell membrane. Putative pheromone receptor implicated in the regulation of social as well as reproductive behavior. The polypeptide is Vomeronasal type-1 receptor 98 (Vom1r98) (Rattus norvegicus (Rat)).